A 341-amino-acid polypeptide reads, in one-letter code: 4-hydroxy-2-oxovalerate aldolase (341 aa).

The Pyruvate carboxyltransferase domain maps to 5-257 (ITLHDMTLRD…ETGVDVFRIA (253 aa)). 13–14 (RD) is a binding site for substrate. Residue D14 coordinates Mn(2+). H17 (proton acceptor) is an active-site residue. Positions 167 and 196 each coordinate substrate. 2 residues coordinate Mn(2+): H196 and H198. Y287 is a substrate binding site.

The protein belongs to the 4-hydroxy-2-oxovalerate aldolase family.

It carries out the reaction (S)-4-hydroxy-2-oxopentanoate = acetaldehyde + pyruvate. This Cupriavidus taiwanensis (strain DSM 17343 / BCRC 17206 / CCUG 44338 / CIP 107171 / LMG 19424 / R1) (Ralstonia taiwanensis (strain LMG 19424)) protein is 4-hydroxy-2-oxovalerate aldolase (mhpE).